The following is a 490-amino-acid chain: Nicotinate phosphoribosyltransferase (490 aa).

His-206 carries the post-translational modification Phosphohistidine.

Belongs to the NAPRTase family. Transiently phosphorylated on a His residue during the reaction cycle. Phosphorylation strongly increases the affinity for substrates and increases the rate of nicotinate D-ribonucleotide production. Dephosphorylation regenerates the low-affinity form of the enzyme, leading to product release.

It carries out the reaction nicotinate + 5-phospho-alpha-D-ribose 1-diphosphate + ATP + H2O = nicotinate beta-D-ribonucleotide + ADP + phosphate + diphosphate. Its pathway is cofactor biosynthesis; NAD(+) biosynthesis; nicotinate D-ribonucleotide from nicotinate: step 1/1. Functionally, catalyzes the synthesis of beta-nicotinate D-ribonucleotide from nicotinate and 5-phospho-D-ribose 1-phosphate at the expense of ATP. This Bacillus subtilis (strain 168) protein is Nicotinate phosphoribosyltransferase (pncB).